The chain runs to 909 residues: Ribosome-releasing factor 2, mitochondrial (909 aa).

The transit peptide at 1–15 directs the protein to the mitochondrion; sequence MVAAPLLRAHQAARL. Positions 57–367 constitute a tr-type G domain; sequence DRTRNIGIIA…AVTNLLPSPP (311 aa). Residue 66-73 coordinates GTP; sequence AHIDAGKT. The interval 121–148 is disordered; that stretch reads WPPQTAGDGNTTPQEPQTPRSASSHTVN. Residues 127–148 are compositionally biased toward polar residues; sequence GDGNTTPQEPQTPRSASSHTVN. Residues 151-155 and 205-208 contribute to the GTP site; these read DTPGH and NKLD.

This sequence belongs to the TRAFAC class translation factor GTPase superfamily. Classic translation factor GTPase family. EF-G/EF-2 subfamily.

The protein resides in the mitochondrion. Its function is as follows. Mitochondrial GTPase that mediates the disassembly of ribosomes from messenger RNA at the termination of mitochondrial protein biosynthesis. Not involved in the GTP-dependent ribosomal translocation step during translation elongation. The sequence is that of Ribosome-releasing factor 2, mitochondrial (mef2) from Aspergillus flavus (strain ATCC 200026 / FGSC A1120 / IAM 13836 / NRRL 3357 / JCM 12722 / SRRC 167).